Consider the following 235-residue polypeptide: MSQRFNFDPSFLQPDSIEKATIIQKELANRICLEDEFNTPEFFGGMDVSNNLFDPKQIIYATAILLDSKMLSVQFHNSVSQRQTFPYIPGFLGFREAPALIDALESLPKLPDMIFVDGQGISHPRRLGIASHIGVLVNIPTIGVAKNILFGEPKKDLGSCVGDYVFLYAYGKEIGALVRTKLRCKPLIISTGHRVSLRTAIEYVLNCVKGYRLPEPTRQAHLAANAFRKQSQAGN.

Residues Asp-47 and Asp-117 each coordinate Mg(2+).

It belongs to the endonuclease V family. Mg(2+) is required as a cofactor.

Its subcellular location is the cytoplasm. It carries out the reaction Endonucleolytic cleavage at apurinic or apyrimidinic sites to products with a 5'-phosphate.. DNA repair enzyme involved in the repair of deaminated bases. Selectively cleaves double-stranded DNA at the second phosphodiester bond 3' to a deoxyinosine leaving behind the intact lesion on the nicked DNA. In Protochlamydia amoebophila (strain UWE25), this protein is Endonuclease V.